A 179-amino-acid chain; its full sequence is MIIYLHGFDSTSPGNHEKVLQLQFIDDDVRFINYSTLHPKHDMQHLLKEVSKVIDQANDPNPLICGVGLGAYWSERIGFLCGIKQVMFNPNLHPEKTMAGRIDRPEEYEDIATKCVRQFRTKNQERCLVILSKEDEIHDNSKTAAELDKHYQIIWDETQAHKFKKISHHLQAMKAFKNA.

It belongs to the UPF0227 family.

This chain is UPF0227 protein VIBHAR_01524, found in Vibrio campbellii (strain ATCC BAA-1116).